The chain runs to 67 residues: uncharacterized protein (67 aa).

This is an uncharacterized protein from Escherichia coli (strain K12).